We begin with the raw amino-acid sequence, 299 residues long: Protein tantalus (299 aa).

Residues 16-100 (KDNRSPTTNS…RSSTFGARAG (85 aa)) are disordered. Polar residues predominate over residues 20 to 35 (SPTTNSNLSWQLNQMA). Acidic residues predominate over residues 53 to 69 (ESDDNVSSESHDSDDVD). Residues 84–93 (CISGSSRRSS) show a composition bias toward low complexity. Phosphoserine occurs at positions 204 and 264.

As to quaternary structure, binds to DNA in vitro. Interacts directly with Asx. Ubiquitously expressed in precellularized embryos. Then it decreases at cellular blastoderm to increase again during germ band extension. During germ band extension, it is highly expressed in somatic and visceral mesoderm. Ubiquitously expressed in imaginal disks. In ovary, it is expressed from stage 10.

Its subcellular location is the nucleus. It localises to the cytoplasm. The protein localises to the chromosome. Its function is as follows. Potential cofactor involved in sensory organ development. Despite its interaction with the Polycomb group protein Asx, it does not regulate the expression of homeotic genes. In Drosophila melanogaster (Fruit fly), this protein is Protein tantalus.